Consider the following 1730-residue polypeptide: Myosin-7 (1730 aa).

One can recognise a Myosin N-terminal SH3-like domain in the interval 8-56 (TVGSHVWVEDPDDAWIDGEVEEVNSEEITVNCSGKTVVAKLNNVYPKDP). The region spanning 61-731 (LGVDDMTKLA…QMAEMDAHRA (671 aa)) is the Myosin motor domain. Residues 155–162 (GESGAGKT) and 208–216 (NNNSSRFGK) contribute to the ATP site. 4 actin-binding regions span residues 494–528 (LIEKKPGGIIALLDEACMFPRSTHDTFAQKLYQTF), 530–553 (NHKRFGKPKLAQTDFTICHYAGDV), 588–612 (FPPLPEESSKTSKFSSIGSQFKQQL), and 612–634 (LQSLLESLSTTEPHYIRCVKPNN). 4 IQ domains span residues 757–786 (LQAASTEIQALCRGQVARVWFETMRREAAS), 782–811 (REAASLRIQKQARTYICQNAYKTLCSSACS), 831–850 (RRATIIIQSQIRRCLCHQRY), and 853–882 (TKKAAITTQCGWRVKVARRELRNLKMAAKE). Positions 883 to 1224 (TGALQDAKTK…VSDMETAEQI (342 aa)) form a coiled coil. The 352-residue stretch at 1327–1678 (DRIVPVFGSA…ISNLKLLLTN (352 aa)) folds into the Dilute domain. Disordered regions lie at residues 1367 to 1387 (QSSTGSSPTKPPQPTSFFGRM) and 1456 to 1520 (DSSV…SSEE). Residues 1456-1465 (DSSVVNSPSK) show a composition bias toward low complexity. Over residues 1475–1508 (SSEENSPKKSSEENSPKESSGDKSPQKLSDDNSP) the composition is skewed to basic and acidic residues.

This sequence belongs to the TRAFAC class myosin-kinesin ATPase superfamily. Myosin family. Plant myosin class XI subfamily. As to quaternary structure, homodimer.

In terms of biological role, myosin heavy chain that is required for the cell cycle-regulated transport of various organelles and proteins for their segregation. Functions by binding with its tail domain to receptor proteins on organelles and exerting force with its N-terminal motor domain against actin filaments, thereby transporting its cargo along polarized actin cables. The protein is Myosin-7 (XI-A) of Arabidopsis thaliana (Mouse-ear cress).